The sequence spans 298 residues: Peroxisomal 2,4-dienoyl-CoA reductase [(3E)-enoyl-CoA-producing] (298 aa).

19-24 (GGGSGI) is a binding site for NADP(+). Arginine 44 contributes to the substrate binding site. NADP(+) is bound at residue aspartate 69. Residues arginine 71, phenylalanine 101, and 109–111 (SPN) contribute to the substrate site. Residues lysine 173 and 200 to 206 (PGPIGGT) each bind NADP(+). The disordered stretch occupies residues 279–298 (SRAVEKRSRAKPVGLPTSKL). The Microbody targeting signal motif lies at 296-298 (SKL).

The protein belongs to the short-chain dehydrogenases/reductases (SDR) family. 2,4-dienoyl-CoA reductase subfamily.

The protein resides in the peroxisome. It carries out the reaction a (2E,4Z)-dienoyl-CoA + NADPH + H(+) = a 4,5-saturated-(3E)-enoyl-CoA + NADP(+). The catalysed reaction is a (2E,4E)-dienoyl-CoA + NADPH + H(+) = a 4,5-saturated-(3E)-enoyl-CoA + NADP(+). Functionally, auxiliary enzyme of beta-oxidation. Participates in the degradation of unsaturated fatty enoyl-CoA esters having double bonds in both even- and odd-numbered positions in peroxisome. Catalyzes the NADP-dependent reduction of 2,4-dienoyl-CoA to yield trans-3-enoyl-CoA. The polypeptide is Peroxisomal 2,4-dienoyl-CoA reductase [(3E)-enoyl-CoA-producing] (Arabidopsis thaliana (Mouse-ear cress)).